The chain runs to 226 residues: Ribonuclease 3 (226 aa).

One can recognise an RNase III domain in the interval 6 to 128 (INRLQRKLGY…LIGGVFLDSD (123 aa)). Glutamate 41 provides a ligand contact to Mg(2+). Aspartate 45 is a catalytic residue. The Mg(2+) site is built by aspartate 114 and glutamate 117. Glutamate 117 is an active-site residue. The region spanning 155–225 (DPKTRLQEFL…AEQALIKLEL (71 aa)) is the DRBM domain.

Belongs to the ribonuclease III family. As to quaternary structure, homodimer. Requires Mg(2+) as cofactor.

It localises to the cytoplasm. It carries out the reaction Endonucleolytic cleavage to 5'-phosphomonoester.. In terms of biological role, digests double-stranded RNA. Involved in the processing of primary rRNA transcript to yield the immediate precursors to the large and small rRNAs (23S and 16S). Processes some mRNAs, and tRNAs when they are encoded in the rRNA operon. Processes pre-crRNA and tracrRNA of type II CRISPR loci if present in the organism. The protein is Ribonuclease 3 of Serratia proteamaculans (strain 568).